Here is a 134-residue protein sequence, read N- to C-terminus: MEGKTLIVSVLIMSLFMAQNQVDANICCPSIQARTFYNACLFAVGSPSSCIRNSSCLDISESTCPRGYTNDILENTGDAVTEYCKLGCVSSVCGALTILQNSDASEIVNGEVEKCTMACSTVCTKGSMNAVENA.

The N-terminal stretch at 1-24 (MEGKTLIVSVLIMSLFMAQNQVDA) is a signal peptide. Intrachain disulfides connect C27–C64, C28–C56, and C40–C50. Positions 71–134 (DILENTGDAV…KGSMNAVENA (64 aa)) are cleaved as a propeptide — acidic domain.

The protein belongs to the plant thionin (TC 1.C.44) family.

Its subcellular location is the secreted. Functionally, thionins are small plant proteins which are toxic to animal cells. They seem to exert their toxic effect at the level of the cell membrane. Their precise function is not known. This Arabidopsis thaliana (Mouse-ear cress) protein is Probable thionin-2.4.